Here is a 562-residue protein sequence, read N- to C-terminus: IRK-interacting protein (562 aa).

2 disordered regions span residues 29–61 and 303–322; these read ASLM…RPLP and VVSQ…SEMP. Residues 36-61 show a composition bias toward low complexity; it reads SSPSSNYSLRNPSSSSAASPASRPLP. The stretch at 246 to 306 forms a coiled coil; the sequence is SGVEKLKREL…LREATEVVSQ (61 aa).

In terms of assembly, interacts with IRK. In terms of tissue distribution, highly expressed in root tips, shoot apices and developing flowers.

The chain is IRK-interacting protein from Arabidopsis thaliana (Mouse-ear cress).